The chain runs to 295 residues: MPKVTDIANELKQAIDAKDEVQIAFIASEYSAESREKIAKAYVASYGKELPDDIKKALKGGSEESLLMDLFSDRHEVRAQHIRDALSGRNDHMAFFDTVILCTPEDWHETVAAYTRMFKKPLVEDFMKDVGRKEDWCLLMEKWMAHERVSRPGSPEDEAQRLDQAFDQKNTAYLIDFFGTVPSAEYRPIAEAFKAQNGKSIEQAIATIYTKTDYYTFYCAHFALLGMHRLAAYLINCACNDKGDEKRMRRITGMMVDKCLGAKHAYKIYGDMGTDIERCFDKRMAPILRTLWRVK.

4 Annexin repeats span residues 2–71 (PKVT…MDLF), 73–143 (DRHE…MEKW), 153–223 (GSPE…AHFA), and 226–293 (GMHR…TLWR).

The protein belongs to the annexin family. Giardin subunit alpha subfamily.

Its subcellular location is the cytoplasm. The protein resides in the cytoskeleton. Functionally, giardins are involved in parasite attachment to the intestinal mucosa and in the cytoskeletal disassembly and reassembly that marks the transition from infectious trophozoite to transmissible cyst. They may interact with other cytoskeletal proteins such as microtubules in the microribbons or crossbridges, to maintain the integrity of the ventral disk. This Giardia intestinalis (Giardia lamblia) protein is Giardin subunit alpha-1.